The following is a 72-amino-acid chain: Conotoxin Lt6.3 (72 aa).

The signal sequence occupies residues 1–22; it reads MKLTSVVIVAVLFLAACQLTTS. Positions 23 to 46 are excised as a propeptide; that stretch reads DGSRGTWKDRAVRSITKVSMLRWP. Cystine bridges form between C47-C61, C54-C64, and C60-C71.

The protein belongs to the conotoxin O1 superfamily. In terms of tissue distribution, expressed by the venom duct.

It localises to the secreted. The chain is Conotoxin Lt6.3 from Conus litteratus (Lettered cone).